A 772-amino-acid polypeptide reads, in one-letter code: MWIQVRTMDGRDTRRIDSLSKLTKVDDLRDRIQQLFGVALESQRLFYRGKQMENGHTLFDYSVGLNDIVQLLVRQIPDSFPTKHKECELSDASAGCGSGQRDSDSGSGEGAMDVDGQSISIIGENVGTSLYKKNDLVDARDLNMGAWFEAQIVNVSKKVGPYGTLPEVSDTSVTSDAIIYHVKYEDYPENGVVQLTCKDVRLRARTTLPWHEIKVGQVVMVNYNPDEPKERGYWYDAEILRKHESKKIKEIYAKVLLGDAGDSLNDCRIRFVNEIYKIEEPGSTYLNTESPQKRQNGPECKHCKDNPKRACRMCACCICGGKQDPEKQLLCDECDLAFHIYCLKPPLSVIPQDEDWYCPDCRNDASEVVLAGEKLKESKKKARMASANSSSQRDWGKGMACVGRSRECTIVPSNHYGPIPGVPVGTLWKFRVQVSESGVHRPHVAGIHGRSNDGSYSLVLAGGYEDDVDNGNEFTYTGSGGRDLSGNKRTAEQSCDQKLSNMNRALALNCSAPINDKEGSIAKDWRAGKPVRVVRNSKGRKHSKYAPEEGNRYDGIYKVVKYWPEKGKSGFLVWRYLLRRDDYEPAPWSKEGKERIKKLGLTMQYPDGYLETLASKEREKENKTEDEPIDSPSKGKRKRNSDNEQTAAKSIPKKMKVASYKLTLEQKTLIKQDVLNAKLWSEVMLFLKEGPKFVNKVEETFLCICCQEVVYEPVTTECHHNICKGCLDRSFKALVHSCPACRHDLGKNYPLNVNKPLQAILSQLFPGYESGR.

Residues 1–77 enclose the Ubiquitin-like domain; that stretch reads MWIQVRTMDG…IVQLLVRQIP (77 aa). The disordered stretch occupies residues 90 to 111; the sequence is SDASAGCGSGQRDSDSGSGEGA. Tudor-like regions lie at residues 129–205 and 212–281; these read SLYK…LRAR and EIKV…IEEP. The segment at 291–299 is linker; sequence PQKRQNGPE. The PHD-type zinc-finger motif lies at 297-364; sequence GPECKHCKDN…DWYCPDCRND (68 aa). Histone H3R2me0 binding regions lie at residues 331-335 and 351-353; these read CDECD and PQD. Positions 417 to 580 constitute a YDG domain; sequence GPIPGVPVGT…FLVWRYLLRR (164 aa). Residues 443–444 are required to promote base flipping; that stretch reads HV. Residues 461-462 and Asp467 contribute to the DNA site; that span reads AG. Required for formation of a 5-methylcytosine-binding pocket regions lie at residues 464–467 and 476–479; these read YEDD and YTGS. The segment covering 615–626 has biased composition (basic and acidic residues); sequence SKEREKENKTED. Residues 615–649 are disordered; sequence SKEREKENKTEDEPIDSPSKGKRKRNSDNEQTAAK. An RING-type zinc finger spans residues 703–742; the sequence is CICCQEVVYEPVTTECHHNICKGCLDRSFKALVHSCPACR.

The protein resides in the nucleus. It catalyses the reaction S-ubiquitinyl-[E2 ubiquitin-conjugating enzyme]-L-cysteine + [acceptor protein]-L-lysine = [E2 ubiquitin-conjugating enzyme]-L-cysteine + N(6)-ubiquitinyl-[acceptor protein]-L-lysine.. Its pathway is protein modification; protein ubiquitination. Functionally, multidomain protein that acts as a key epigenetic regulator by bridging DNA methylation and chromatin modification. Specifically recognizes and binds hemimethylated DNA at replication forks via its YDG domain and recruits dnmt1 methyltransferase to ensure faithful propagation of the DNA methylation patterns through DNA replication. In addition to its role in maintenance of DNA methylation, also plays a key role in chromatin modification: through its tudor-like regions and PHD-type zinc fingers, specifically recognizes and binds histone H3 trimethylated at 'Lys-9' (H3K9me3) and unmethylated at 'Arg-2' (H3R2me0), respectively, and recruits chromatin proteins. Enriched in pericentric heterochromatin where it recruits different chromatin modifiers required for this chromatin replication. Also localizes to euchromatic regions where it negatively regulates transcription possibly by impacting DNA methylation and histone modifications. Has E3 ubiquitin-protein ligase activity by mediating the ubiquitination of target proteins. However, it is still unclear how E3 ubiquitin-protein ligase activity is related to its role in chromatin in vivo. The polypeptide is E3 ubiquitin-protein ligase UHRF1 (uhrf1) (Xenopus laevis (African clawed frog)).